The chain runs to 615 residues: Deoxyribodipyrimidine photo-lyase (615 aa).

The disordered stretch occupies residues 1–53 (MAPSKRKASAPPQTSHVNGNPSADKKRKTTTDAPPTNPNTSSDPLRAPHPFYK). A compositionally biased stretch (polar residues) spans 11 to 21 (PPQTSHVNGNP). Low complexity predominate over residues 31-40 (TDAPPTNPNT). The region spanning 108-249 (QAVVHWFKMD…AADVVHDTCV (142 aa)) is the Photolyase/cryptochrome alpha/beta domain. Tyr-352 provides a ligand contact to FAD. Arg-356 lines the DNA pocket. FAD is bound at residue 364-368 (TSNLS). Interaction with DNA regions lie at residues 407–414 (EVAWRDFY) and 474–475 (NR). FAD is bound at residue 505–507 (DGD). Gln-537 is a binding site for DNA.

The protein belongs to the DNA photolyase class-1 family. In terms of assembly, monomer. FAD serves as cofactor. The cofactor is (6R)-5,10-methylene-5,6,7,8-tetrahydrofolate.

It carries out the reaction cyclobutadipyrimidine (in DNA) = 2 pyrimidine residues (in DNA).. In terms of biological role, involved in repair of UV radiation-induced DNA damage. Catalyzes the light-dependent monomerization (300-600 nm) of cyclobutyl pyrimidine dimers (in cis-syn configuration), which are formed between adjacent bases on the same DNA strand upon exposure to ultraviolet radiation. The polypeptide is Deoxyribodipyrimidine photo-lyase (phr) (Neurospora crassa (strain ATCC 24698 / 74-OR23-1A / CBS 708.71 / DSM 1257 / FGSC 987)).